A 224-amino-acid polypeptide reads, in one-letter code: Holliday junction branch migration complex subunit RuvA (224 aa).

The domain I stretch occupies residues 1-64 (MIGKVAGILD…EDLLQLFGFP (64 aa)). Residues 65 to 143 (TMIEKEWHRL…ALMAMGGGTA (79 aa)) are domain II. Residues 141–185 (GTAALAPSEPPEPQPGTSSGSRRKTRAPEPPRPSHTADALSALAN) are disordered. Positions 144–170 (ALAPSEPPEPQPGTSSGSRRKTRAPEP) are flexible linker. Residues 171-224 (PRPSHTADALSALANLGYQPTDAAQAVAQAAGESPDADTAALIRAALKLLAPKS) are domain III.

This sequence belongs to the RuvA family. In terms of assembly, homotetramer. Forms an RuvA(8)-RuvB(12)-Holliday junction (HJ) complex. HJ DNA is sandwiched between 2 RuvA tetramers; dsDNA enters through RuvA and exits via RuvB. An RuvB hexamer assembles on each DNA strand where it exits the tetramer. Each RuvB hexamer is contacted by two RuvA subunits (via domain III) on 2 adjacent RuvB subunits; this complex drives branch migration. In the full resolvosome a probable DNA-RuvA(4)-RuvB(12)-RuvC(2) complex forms which resolves the HJ.

The protein resides in the cytoplasm. Its function is as follows. The RuvA-RuvB-RuvC complex processes Holliday junction (HJ) DNA during genetic recombination and DNA repair, while the RuvA-RuvB complex plays an important role in the rescue of blocked DNA replication forks via replication fork reversal (RFR). RuvA specifically binds to HJ cruciform DNA, conferring on it an open structure. The RuvB hexamer acts as an ATP-dependent pump, pulling dsDNA into and through the RuvAB complex. HJ branch migration allows RuvC to scan DNA until it finds its consensus sequence, where it cleaves and resolves the cruciform DNA. This Cereibacter sphaeroides (strain KD131 / KCTC 12085) (Rhodobacter sphaeroides) protein is Holliday junction branch migration complex subunit RuvA.